The following is a 73-amino-acid chain: Putative membrane protein insertion efficiency factor (73 aa).

Belongs to the UPF0161 family.

Its subcellular location is the cell inner membrane. Could be involved in insertion of integral membrane proteins into the membrane. This chain is Putative membrane protein insertion efficiency factor, found in Neisseria gonorrhoeae (strain ATCC 700825 / FA 1090).